The primary structure comprises 281 residues: Large ribosomal subunit protein uL2 (281 aa).

Residues 220–281 are disordered; sequence VRGSVMNPND…RRRDGKALSK (62 aa). Basic residues predominate over residues 258 to 271; the sequence is KTRKKNKQSNKMIM. Positions 272 to 281 are enriched in basic and acidic residues; it reads RRRDGKALSK.

This sequence belongs to the universal ribosomal protein uL2 family. Part of the 50S ribosomal subunit. Forms a bridge to the 30S subunit in the 70S ribosome.

One of the primary rRNA binding proteins. Required for association of the 30S and 50S subunits to form the 70S ribosome, for tRNA binding and peptide bond formation. It has been suggested to have peptidyltransferase activity; this is somewhat controversial. Makes several contacts with the 16S rRNA in the 70S ribosome. In Lachnoclostridium phytofermentans (strain ATCC 700394 / DSM 18823 / ISDg) (Clostridium phytofermentans), this protein is Large ribosomal subunit protein uL2.